The sequence spans 263 residues: Triosephosphate isomerase (263 aa).

Substrate is bound at residue 10 to 12; that stretch reads NWK. H104 (electrophile) is an active-site residue. E176 (proton acceptor) is an active-site residue. Residues G182, S221, and 242 to 243 contribute to the substrate site; that span reads GG.

This sequence belongs to the triosephosphate isomerase family. As to quaternary structure, homodimer.

It localises to the cytoplasm. The enzyme catalyses D-glyceraldehyde 3-phosphate = dihydroxyacetone phosphate. Its pathway is carbohydrate biosynthesis; gluconeogenesis. It functions in the pathway carbohydrate degradation; glycolysis; D-glyceraldehyde 3-phosphate from glycerone phosphate: step 1/1. Involved in the gluconeogenesis. Catalyzes stereospecifically the conversion of dihydroxyacetone phosphate (DHAP) to D-glyceraldehyde-3-phosphate (G3P). This is Triosephosphate isomerase from Haemophilus influenzae (strain PittEE).